Reading from the N-terminus, the 88-residue chain is Small ribosomal subunit protein bS20 (88 aa).

This sequence belongs to the bacterial ribosomal protein bS20 family.

Its function is as follows. Binds directly to 16S ribosomal RNA. In Heliobacterium modesticaldum (strain ATCC 51547 / Ice1), this protein is Small ribosomal subunit protein bS20.